The sequence spans 431 residues: 3-phosphoshikimate 1-carboxyvinyltransferase (431 aa).

Lysine 26, serine 27, and arginine 31 together coordinate 3-phosphoshikimate. Lysine 26 lines the phosphoenolpyruvate pocket. Phosphoenolpyruvate is bound by residues glycine 99 and arginine 127. The 3-phosphoshikimate site is built by serine 170, serine 171, glutamine 172, serine 199, glutamate 314, and histidine 343. Glutamine 172 lines the phosphoenolpyruvate pocket. Glutamate 314 acts as the Proton acceptor in catalysis. Phosphoenolpyruvate is bound by residues arginine 347, arginine 388, and lysine 413.

Belongs to the EPSP synthase family. As to quaternary structure, monomer.

It is found in the cytoplasm. The catalysed reaction is 3-phosphoshikimate + phosphoenolpyruvate = 5-O-(1-carboxyvinyl)-3-phosphoshikimate + phosphate. It functions in the pathway metabolic intermediate biosynthesis; chorismate biosynthesis; chorismate from D-erythrose 4-phosphate and phosphoenolpyruvate: step 6/7. Catalyzes the transfer of the enolpyruvyl moiety of phosphoenolpyruvate (PEP) to the 5-hydroxyl of shikimate-3-phosphate (S3P) to produce enolpyruvyl shikimate-3-phosphate and inorganic phosphate. This chain is 3-phosphoshikimate 1-carboxyvinyltransferase, found in Mycobacterium ulcerans (strain Agy99).